The primary structure comprises 59 residues: Small ribosomal subunit protein bS21 (59 aa).

The interval 27–59 (GLMAEMRKREHYEKPSVRRKKKAQARNKKKRYA) is disordered. Basic and acidic residues predominate over residues 31–42 (EMRKREHYEKPS). Residues 43 to 59 (VRRKKKAQARNKKKRYA) show a composition bias toward basic residues.

It belongs to the bacterial ribosomal protein bS21 family.

In Carboxydothermus hydrogenoformans (strain ATCC BAA-161 / DSM 6008 / Z-2901), this protein is Small ribosomal subunit protein bS21.